The following is a 97-amino-acid chain: Large ribosomal subunit protein bL28 (97 aa).

This sequence belongs to the bacterial ribosomal protein bL28 family.

The polypeptide is Large ribosomal subunit protein bL28 (Bartonella henselae (strain ATCC 49882 / DSM 28221 / CCUG 30454 / Houston 1) (Rochalimaea henselae)).